Reading from the N-terminus, the 95-residue chain is Glutamyl-tRNA(Gln) amidotransferase subunit C (95 aa).

The protein belongs to the GatC family. Heterotrimer of A, B and C subunits.

The catalysed reaction is L-glutamyl-tRNA(Gln) + L-glutamine + ATP + H2O = L-glutaminyl-tRNA(Gln) + L-glutamate + ADP + phosphate + H(+). The enzyme catalyses L-aspartyl-tRNA(Asn) + L-glutamine + ATP + H2O = L-asparaginyl-tRNA(Asn) + L-glutamate + ADP + phosphate + 2 H(+). Functionally, allows the formation of correctly charged Asn-tRNA(Asn) or Gln-tRNA(Gln) through the transamidation of misacylated Asp-tRNA(Asn) or Glu-tRNA(Gln) in organisms which lack either or both of asparaginyl-tRNA or glutaminyl-tRNA synthetases. The reaction takes place in the presence of glutamine and ATP through an activated phospho-Asp-tRNA(Asn) or phospho-Glu-tRNA(Gln). This Moraxella catarrhalis (Branhamella catarrhalis) protein is Glutamyl-tRNA(Gln) amidotransferase subunit C.